The chain runs to 93 residues: Small ribosomal subunit protein uS19 (93 aa).

It belongs to the universal ribosomal protein uS19 family.

In terms of biological role, protein S19 forms a complex with S13 that binds strongly to the 16S ribosomal RNA. This chain is Small ribosomal subunit protein uS19, found in Brevibacillus brevis (strain 47 / JCM 6285 / NBRC 100599).